A 92-amino-acid polypeptide reads, in one-letter code: Small ribosomal subunit protein uS19c (92 aa).

Belongs to the universal ribosomal protein uS19 family.

Its subcellular location is the plastid. The protein resides in the chloroplast. In terms of biological role, protein S19 forms a complex with S13 that binds strongly to the 16S ribosomal RNA. This chain is Small ribosomal subunit protein uS19c, found in Calycanthus floridus var. glaucus (Eastern sweetshrub).